We begin with the raw amino-acid sequence, 485 residues long: Noelin (485 aa).

An N-terminal signal peptide occupies residues 1–16 (MSVPLLKIGVVLSTMA). 8 N-linked (GlcNAc...) asparagine glycosylation sites follow: N33, N103, N187, N288, N307, N394, N431, and N473. The stretch at 87–227 (RDARTKQLRQ…LRACMQKLAC (141 aa)) forms a coiled coil. Positions 226–478 (ACGKLTGISD…QTLYNVTLFH (253 aa)) constitute an Olfactomedin-like domain. A disulfide bridge links C227 with C409. The Endoplasmic reticulum retention signal motif lies at 482–485 (SDEL).

In terms of assembly, homotetramer; disulfide-linked. Dimer of dimers, giving rise to a V-shaped homotretramer. Isoform 1 and isoform 3 interact with RTN4R. Identified in a complex with RTN4R and LINGO1. Peripherally associated with AMPAR complex. AMPAR complex consists of an inner core made of 4 pore-forming GluA/GRIA proteins (GRIA1, GRIA2, GRIA3 and GRIA4) and 4 major auxiliary subunits arranged in a twofold symmetry. One of the two pairs of distinct binding sites is occupied either by CNIH2, CNIH3 or CACNG2, CACNG3. The other harbors CACNG2, CACNG3, CACNG4, CACNG8 or GSG1L. This inner core of AMPAR complex is complemented by outer core constituents binding directly to the GluA/GRIA proteins at sites distinct from the interaction sites of the inner core constituents. Outer core constituents include at least PRRT1, PRRT2, CKAMP44/SHISA9, FRRS1L and NRN1. The proteins of the inner and outer core serve as a platform for other, more peripherally associated AMPAR constituents, including OLFM1. Alone or in combination, these auxiliary subunits control the gating and pharmacology of the AMPAR complex and profoundly impact their biogenesis and protein processing. Interacts with OLFM2. Interacts with DTNB. As to expression, expressed in the brain cortex, olfactory bulb and vomeronasal neuroepithelium (at protein level). Detected in brain cortex, hippocampus, dorsal root ganglion and olfactory bulb.

The protein resides in the secreted. The protein localises to the synapse. It localises to the endoplasmic reticulum. Its subcellular location is the cell projection. It is found in the axon. The protein resides in the perikaryon. Its function is as follows. Contributes to the regulation of axonal growth in the embryonic and adult central nervous system by inhibiting interactions between RTN4R and LINGO1. Inhibits RTN4R-mediated axon growth cone collapse. May play an important role in regulating the production of neural crest cells by the neural tube. May be required for normal responses to olfactory stimuli. The chain is Noelin (Olfm1) from Mus musculus (Mouse).